Consider the following 439-residue polypeptide: Trigger factor (439 aa).

The PPIase FKBP-type domain maps to 175–260; that stretch reads GDRVTISYRS…VERLSVKDEI (86 aa).

Belongs to the FKBP-type PPIase family. Tig subfamily.

The protein localises to the cytoplasm. It carries out the reaction [protein]-peptidylproline (omega=180) = [protein]-peptidylproline (omega=0). Its function is as follows. Involved in protein export. Acts as a chaperone by maintaining the newly synthesized protein in an open conformation. Functions as a peptidyl-prolyl cis-trans isomerase. The sequence is that of Trigger factor from Anaplasma phagocytophilum (strain HZ).